Reading from the N-terminus, the 133-residue chain is Ribonuclease P protein component (133 aa).

It belongs to the RnpA family. As to quaternary structure, consists of a catalytic RNA component (M1 or rnpB) and a protein subunit.

The enzyme catalyses Endonucleolytic cleavage of RNA, removing 5'-extranucleotides from tRNA precursor.. In terms of biological role, RNaseP catalyzes the removal of the 5'-leader sequence from pre-tRNA to produce the mature 5'-terminus. It can also cleave other RNA substrates such as 4.5S RNA. The protein component plays an auxiliary but essential role in vivo by binding to the 5'-leader sequence and broadening the substrate specificity of the ribozyme. The sequence is that of Ribonuclease P protein component from Synechococcus sp. (strain JA-2-3B'a(2-13)) (Cyanobacteria bacterium Yellowstone B-Prime).